Reading from the N-terminus, the 251-residue chain is MSFTFKQFHIDDQQCGMAVSTDAVLLGAWAELTQSSHILDIGAGSGLLSLMAAQRSPHHTSIIAVEIDNAAAKACQFNIKQSPWSETVQLFHGAIQDFQQRHNNNDEPLFDHIICNPPYFEQGTQAKNSARADARHTNTLSFAELQNVISQLLAPQGTASVILPLQSLASFIQQLNAYGLFVAKQLDIISIEGKVANRSILAIQHNPTTAEPQTLTNPAVETQYHQMTIRDKQGRYSETMIDLCRPFYLKL.

This sequence belongs to the methyltransferase superfamily. tRNA (adenine-N(6)-)-methyltransferase family.

The protein localises to the cytoplasm. The enzyme catalyses adenosine(37) in tRNA1(Val) + S-adenosyl-L-methionine = N(6)-methyladenosine(37) in tRNA1(Val) + S-adenosyl-L-homocysteine + H(+). In terms of biological role, specifically methylates the adenine in position 37 of tRNA(1)(Val) (anticodon cmo5UAC). The polypeptide is tRNA1(Val) (adenine(37)-N6)-methyltransferase (Shewanella frigidimarina (strain NCIMB 400)).